Here is a 208-residue protein sequence, read N- to C-terminus: N-(5'-phosphoribosyl)anthranilate isomerase (208 aa).

This sequence belongs to the TrpF family.

The enzyme catalyses N-(5-phospho-beta-D-ribosyl)anthranilate = 1-(2-carboxyphenylamino)-1-deoxy-D-ribulose 5-phosphate. Its pathway is amino-acid biosynthesis; L-tryptophan biosynthesis; L-tryptophan from chorismate: step 3/5. This Methanothrix thermoacetophila (strain DSM 6194 / JCM 14653 / NBRC 101360 / PT) (Methanosaeta thermophila) protein is N-(5'-phosphoribosyl)anthranilate isomerase.